Here is a 959-residue protein sequence, read N- to C-terminus: Alanine--tRNA ligase (959 aa).

Phosphoserine is present on S389. Zn(2+) is bound by residues H606, H610, C725, and H729.

The protein belongs to the class-II aminoacyl-tRNA synthetase family. In terms of assembly, monomer. Zn(2+) is required as a cofactor.

Its subcellular location is the mitochondrion. It localises to the cytoplasm. The enzyme catalyses tRNA(Ala) + L-alanine + ATP = L-alanyl-tRNA(Ala) + AMP + diphosphate. Functionally, catalyzes the attachment of alanine to tRNA(Ala) in a two-step reaction: alanine is first activated by ATP to form Ala-AMP and then transferred to the acceptor end of tRNA(Ala). Also edits incorrectly charged tRNA(Ala) via its editing domain. The polypeptide is Alanine--tRNA ligase (ala1) (Schizosaccharomyces pombe (strain 972 / ATCC 24843) (Fission yeast)).